Consider the following 439-residue polypeptide: MAISKIHSRYVYDSRGNPTVEVELTTEKGTFRSIVPSGASTGVHEALELRDGDKSKWLGKGVLKAVANVNDTIAPALIEANIDVADQAKIDEFLLKLDGTPNKAKLGANAILGVSLAAAKAGAAQKDVPLYKHIADISKAKEGKFVLPVPFQNVLNGGSHAGGDLAFQEFMIVPSGAPSFSEGLRIGSEVYHHLKSLTKKKYGQSAGNVGDEGGVAPDIKTAKEALDLIVSAIEAAGYTGQVDIAMDVASSEFYKDGLYDLDFKNPNSDKSKWITGPQLAELYEQLLNEYPIVSIEDPFAEDDWEAWSHFFSKVEGKTQIVGDDLTVTNPIRIKKAIETKAADALLLKVNQIGTLTESIQAANDSYAAGWGVMVSHRSGETEDTFIADLSVGIRSGQTKTGAPARSERLAKLNQILRIEEELGDKAIYAGKDFHKAHSL.

Substrate is bound by residues H160 and E169. E212 serves as the catalytic Proton donor. Residues D247, E296, and D323 each contribute to the Mg(2+) site. Residues E296 and D323 each contribute to the substrate site. K348 (proton acceptor) is an active-site residue. Substrate-binding positions include 375–378 (SHRS) and K399.

The protein belongs to the enolase family. In terms of assembly, homodimer. It depends on Mg(2+) as a cofactor.

Its subcellular location is the cytoplasm. The enzyme catalyses (2R)-2-phosphoglycerate = phosphoenolpyruvate + H2O. Its pathway is carbohydrate degradation; glycolysis; pyruvate from D-glyceraldehyde 3-phosphate: step 4/5. In Rhodotorula mucilaginosa (Yeast), this protein is Enolase (ENO).